A 516-amino-acid polypeptide reads, in one-letter code: Gamma-aminobutyrate transaminase 1, mitochondrial (516 aa).

Residues 1–47 (MVIARGLLRSNASSSSSQAINLLKYVTSTGSLQGHTQNLCDASTRHF) constitute a mitochondrion transit peptide. Positions 45 to 60 (RHFSSVPSPQSNSTEE) are enriched in polar residues. Residues 45–64 (RHFSSVPSPQSNSTEENGFK) are disordered. Residue 171–172 (GS) coordinates pyridoxal 5'-phosphate. Tyr204 serves as a coordination point for substrate. Asp311 is a pyridoxal 5'-phosphate binding site. Lys340 is a substrate binding site. Lys340 carries the N6-(pyridoxal phosphate)lysine modification.

This sequence belongs to the class-III pyridoxal-phosphate-dependent aminotransferase family.

Its subcellular location is the mitochondrion. It catalyses the reaction 4-aminobutanoate + pyruvate = succinate semialdehyde + L-alanine. The enzyme catalyses 4-aminobutanoate + glyoxylate = succinate semialdehyde + glycine. In terms of biological role, transaminase that degrades gamma-amino butyric acid (GABA) and uses pyruvate as amino-group acceptor, but not 2-oxoglutarate. In Oryza sativa subsp. indica (Rice), this protein is Gamma-aminobutyrate transaminase 1, mitochondrial.